We begin with the raw amino-acid sequence, 159 residues long: Ribosome-binding factor A (159 aa).

Composition is skewed to basic and acidic residues over residues 118 to 128 (AADDEVAKARE) and 137 to 146 (DPYKEPRVAS). The tract at residues 118 to 159 (AADDEVAKARENAQPAGDADPYKEPRVASDEDEASPDVREAD) is disordered.

The protein belongs to the RbfA family. As to quaternary structure, monomer. Binds 30S ribosomal subunits, but not 50S ribosomal subunits or 70S ribosomes.

It localises to the cytoplasm. In terms of biological role, one of several proteins that assist in the late maturation steps of the functional core of the 30S ribosomal subunit. Associates with free 30S ribosomal subunits (but not with 30S subunits that are part of 70S ribosomes or polysomes). Required for efficient processing of 16S rRNA. May interact with the 5'-terminal helix region of 16S rRNA. This is Ribosome-binding factor A from Rhodococcus erythropolis (strain PR4 / NBRC 100887).